Consider the following 303-residue polypeptide: Ribosomal protein L11 methyltransferase (303 aa).

S-adenosyl-L-methionine-binding residues include T152, G173, D195, and N239.

This sequence belongs to the methyltransferase superfamily. PrmA family.

The protein localises to the cytoplasm. It carries out the reaction L-lysyl-[protein] + 3 S-adenosyl-L-methionine = N(6),N(6),N(6)-trimethyl-L-lysyl-[protein] + 3 S-adenosyl-L-homocysteine + 3 H(+). Its function is as follows. Methylates ribosomal protein L11. The protein is Ribosomal protein L11 methyltransferase of Desulforapulum autotrophicum (strain ATCC 43914 / DSM 3382 / VKM B-1955 / HRM2) (Desulfobacterium autotrophicum).